The following is a 445-amino-acid chain: UPF0210 protein SUB1511 (445 aa).

This sequence belongs to the UPF0210 family. Homodimer.

This Streptococcus uberis (strain ATCC BAA-854 / 0140J) protein is UPF0210 protein SUB1511.